The primary structure comprises 205 residues: Cerebellin-3 (205 aa).

Positions Met1–Ala32 are cleaved as a signal peptide. Positions Ala67–Leu205 constitute a C1q domain. A glycan (N-linked (GlcNAc...) asparagine) is linked at Asn90.

Heterohexamer; disulfide-linked heterotrimers. Interacts with CBLN1. May also form oligomers with CBLN2 and CBLN4.

The protein localises to the endoplasmic reticulum. It localises to the golgi apparatus. Its subcellular location is the cis-Golgi network. It is found in the secreted. The protein resides in the synapse. In terms of biological role, may be involved in synaptic functions in the CNS. This chain is Cerebellin-3 (CBLN3), found in Bos taurus (Bovine).